The sequence spans 538 residues: Cytochrome P450 18a1 (538 aa).

A helical membrane pass occupies residues Q24–V44. Position 466 (C466) interacts with heme.

It belongs to the cytochrome P450 family. Heme serves as cofactor. Expressed in body wall (epidermal and muscle cells) and mid- and hind-gut.

The protein localises to the endoplasmic reticulum membrane. Its subcellular location is the microsome membrane. Its function is as follows. Probably involved in steroid hormones biosynthesis. In Drosophila melanogaster (Fruit fly), this protein is Cytochrome P450 18a1 (Cyp18a1).